A 636-amino-acid chain; its full sequence is Receptor-like kinase LIP1 (636 aa).

The disordered stretch occupies residues 18 to 57 (NAPCTTNETNDDNVEHDEFRPPVVATTKRTEEREPAEQQP). One can recognise a Protein kinase domain in the interval 74–352 (FRQECLLGEG…SDVMVALSFL (279 aa)). Residues 80–88 (LGEGGFGRV) and K103 contribute to the ATP site. D201 functions as the Proton acceptor in the catalytic mechanism. 2 positions are modified to phosphoserine: S205 and S236. Phosphothreonine is present on T242. Phosphotyrosine is present on Y250. The disordered stretch occupies residues 389 to 636 (FCISRKDVGN…EEEHISSDHD (248 aa)). The stretch at 403 to 434 (SSDSEDEEEEKEQKAEKEEESTSKKRQEQEET) forms a coiled coil. Basic and acidic residues predominate over residues 413–431 (KEQKAEKEEESTSKKRQEQ). The span at 432-455 (EETATDSDDESDSNSEKDQEEEQS) shows a compositional bias: acidic residues. Residues 480–489 (TNATAQSLKI) are compositionally biased toward polar residues. Composition is skewed to basic and acidic residues over residues 522–531 (DSGRDHDDSS) and 554–566 (HETR…DDSP). A compositionally biased stretch (polar residues) spans 567–576 (RNTSMRINSL). Composition is skewed to basic and acidic residues over residues 588 to 603 (NHQT…KSED) and 619 to 636 (SLHR…SDHD).

Belongs to the protein kinase superfamily. Ser/Thr protein kinase family. As to quaternary structure, interacts with PRK6. Post-translationally, palmitoylated. Expressed in mature pollen and in germinating pollen tubes.

Its subcellular location is the cell membrane. It is found in the cytoplasm. Involved in pollen tube guidance into micropyle. Participates in perception of the ovule-secreted peptide signal LURE1. In Arabidopsis thaliana (Mouse-ear cress), this protein is Receptor-like kinase LIP1.